Here is a 149-residue protein sequence, read N- to C-terminus: Sperm surface protein Sp17 (149 aa).

Residues 83–96 (CEQELAKSSGREET) show a composition bias toward basic and acidic residues. Residues 83 to 114 (CEQELAKSSGREETPVTPFEESTEEEREQEEA) are disordered. Residues 103-113 (ESTEEEREQEE) are compositionally biased toward acidic residues. The region spanning 112–141 (EEAAALKIQSLFRGHVAREEVKKMKSDKNE) is the IQ domain.

In terms of assembly, homodimer. May interact with ROPN1. As to expression, testis- and sperm-specific.

It is found in the membrane. Sperm surface zona pellucida binding protein. Helps to bind spermatozoa to the zona pellucida with high affinity. Might function in binding zona pellucida and carbohydrates. This is Sperm surface protein Sp17 (Spa17) from Mus musculus (Mouse).